Consider the following 647-residue polypeptide: Knirps-related protein (647 aa).

The segment at residues 11-87 (NQTCKVCGEP…VGMSKSGSRY (77 aa)) is a DNA-binding region (nuclear receptor). 2 consecutive NR C4-type zinc fingers follow at residues 14-34 (CKVC…CEGC) and 51-75 (CKNN…LKKC). Disordered stretches follow at residues 111–142 (MAAH…KGMS), 196–274 (HKHP…LSPF), 340–383 (GAGQ…LLTN), and 402–600 (SQQQ…NSIL). Residues 120-134 (AGGGSSGGSGGGQGM) show a composition bias toward gly residues. Composition is skewed to low complexity over residues 200 to 223 (VVAS…VSSV) and 232 to 247 (GGKS…ADGS). The span at 248–260 (HSGGGGGGGGGVT) shows a compositional bias: gly residues. Polar residues-rich tracts occupy residues 370 to 381 (SPSTHANNNHLL) and 420 to 432 (DYSI…PNSE). Basic and acidic residues-rich tracts occupy residues 433-443 (SGRERVKSRQN) and 480-491 (QEERTPAGEDPR). The span at 502–519 (LSMKTTGSSLSSKSSSPE) shows a compositional bias: low complexity. Residues 520-541 (IEPETEISSDVEKNDTDDDDED) are compositionally biased toward acidic residues. The segment covering 542–556 (LKVTPEEEISVRETA) has biased composition (basic and acidic residues). Over residues 567-579 (TTETAKTSIENTH) the composition is skewed to polar residues. Residues 580–599 (NNNNSISNNNNNNNNNNNSI) are compositionally biased toward low complexity.

The protein belongs to the nuclear hormone receptor family. NR0 subfamily.

Its subcellular location is the nucleus. This chain is Knirps-related protein (knrl), found in Drosophila melanogaster (Fruit fly).